Reading from the N-terminus, the 172-residue chain is Crossover junction endodeoxyribonuclease RuvC (172 aa).

Active-site residues include Asp8, Glu67, and Asp139. Asp8, Glu67, and Asp139 together coordinate Mg(2+).

Belongs to the RuvC family. As to quaternary structure, homodimer which binds Holliday junction (HJ) DNA. The HJ becomes 2-fold symmetrical on binding to RuvC with unstacked arms; it has a different conformation from HJ DNA in complex with RuvA. In the full resolvosome a probable DNA-RuvA(4)-RuvB(12)-RuvC(2) complex forms which resolves the HJ. Mg(2+) serves as cofactor.

It localises to the cytoplasm. The catalysed reaction is Endonucleolytic cleavage at a junction such as a reciprocal single-stranded crossover between two homologous DNA duplexes (Holliday junction).. In terms of biological role, the RuvA-RuvB-RuvC complex processes Holliday junction (HJ) DNA during genetic recombination and DNA repair. Endonuclease that resolves HJ intermediates. Cleaves cruciform DNA by making single-stranded nicks across the HJ at symmetrical positions within the homologous arms, yielding a 5'-phosphate and a 3'-hydroxyl group; requires a central core of homology in the junction. The consensus cleavage sequence is 5'-(A/T)TT(C/G)-3'. Cleavage occurs on the 3'-side of the TT dinucleotide at the point of strand exchange. HJ branch migration catalyzed by RuvA-RuvB allows RuvC to scan DNA until it finds its consensus sequence, where it cleaves and resolves the cruciform DNA. This Hahella chejuensis (strain KCTC 2396) protein is Crossover junction endodeoxyribonuclease RuvC.